The following is a 487-amino-acid chain: Chromosomal replication initiator protein DnaA (487 aa).

The segment at 1 to 79 (MPNSMWHQCL…QAPRVMMKVG (79 aa)) is domain I, interacts with DnaA modulators. A disordered region spans residues 78–138 (VGSAPKPTDP…PAPKAQAERR (61 aa)). The interval 79 to 150 (GSAPKPTDPV…QVEGDIKHQS (72 aa)) is domain II. Positions 151 to 367 (FLNETFTFDT…GALRLVIANA (217 aa)) are domain III, AAA+ region. ATP-binding residues include glycine 195, glycine 197, lysine 198, and threonine 199. The segment at 368–487 (HFTGSEITPP…YQNFMRLLTT (120 aa)) is domain IV, binds dsDNA.

Belongs to the DnaA family. Oligomerizes as a right-handed, spiral filament on DNA at oriC.

Its subcellular location is the cytoplasm. Functionally, plays an essential role in the initiation and regulation of chromosomal replication. ATP-DnaA binds to the origin of replication (oriC) to initiate formation of the DNA replication initiation complex once per cell cycle. Binds the DnaA box (a 9 base pair repeat at the origin) and separates the double-stranded (ds)DNA. Forms a right-handed helical filament on oriC DNA; dsDNA binds to the exterior of the filament while single-stranded (ss)DNA is stabiized in the filament's interior. The ATP-DnaA-oriC complex binds and stabilizes one strand of the AT-rich DNA unwinding element (DUE), permitting loading of DNA polymerase. After initiation quickly degrades to an ADP-DnaA complex that is not apt for DNA replication. Binds acidic phospholipids. The sequence is that of Chromosomal replication initiator protein DnaA from Marinobacter nauticus (strain ATCC 700491 / DSM 11845 / VT8) (Marinobacter aquaeolei).